The primary structure comprises 660 residues: Bifunctional polymyxin resistance protein ArnA (660 aa).

Residues 1 to 304 (MKAVIFAYHD…TLGLVAGARL (304 aa)) form a formyltransferase ArnAFT region. The active-site Proton donor; for formyltransferase activity is the His-104. (6R)-10-formyltetrahydrofolate contacts are provided by residues Arg-114 and 136-140 (VKRAD). A dehydrogenase ArnADH region spans residues 314 to 660 (RRIRVLILGV…RSVDVAERAS (347 aa)). Residues Asp-347 and 368-369 (DI) contribute to the NAD(+) site. UDP-alpha-D-glucuronate-binding positions include Ala-393, Tyr-398, and 432 to 433 (TS). The active-site Proton acceptor; for decarboxylase activity is the Glu-434. UDP-alpha-D-glucuronate-binding positions include Arg-460, Asn-492, 526–535 (KLIDGGQQKR), and Tyr-613. Catalysis depends on Arg-619, which acts as the Proton donor; for decarboxylase activity.

It in the N-terminal section; belongs to the Fmt family. UDP-L-Ara4N formyltransferase subfamily. The protein in the C-terminal section; belongs to the NAD(P)-dependent epimerase/dehydratase family. UDP-glucuronic acid decarboxylase subfamily. In terms of assembly, homohexamer, formed by a dimer of trimers.

It carries out the reaction UDP-alpha-D-glucuronate + NAD(+) = UDP-beta-L-threo-pentopyranos-4-ulose + CO2 + NADH. The catalysed reaction is UDP-4-amino-4-deoxy-beta-L-arabinose + (6R)-10-formyltetrahydrofolate = UDP-4-deoxy-4-formamido-beta-L-arabinose + (6S)-5,6,7,8-tetrahydrofolate + H(+). Its pathway is nucleotide-sugar biosynthesis; UDP-4-deoxy-4-formamido-beta-L-arabinose biosynthesis; UDP-4-deoxy-4-formamido-beta-L-arabinose from UDP-alpha-D-glucuronate: step 1/3. It functions in the pathway nucleotide-sugar biosynthesis; UDP-4-deoxy-4-formamido-beta-L-arabinose biosynthesis; UDP-4-deoxy-4-formamido-beta-L-arabinose from UDP-alpha-D-glucuronate: step 3/3. The protein operates within bacterial outer membrane biogenesis; lipopolysaccharide biosynthesis. Functionally, bifunctional enzyme that catalyzes the oxidative decarboxylation of UDP-glucuronic acid (UDP-GlcUA) to UDP-4-keto-arabinose (UDP-Ara4O) and the addition of a formyl group to UDP-4-amino-4-deoxy-L-arabinose (UDP-L-Ara4N) to form UDP-L-4-formamido-arabinose (UDP-L-Ara4FN). The modified arabinose is attached to lipid A and is required for resistance to polymyxin and cationic antimicrobial peptides. The sequence is that of Bifunctional polymyxin resistance protein ArnA from Salmonella paratyphi C (strain RKS4594).